We begin with the raw amino-acid sequence, 271 residues long: uncharacterized protein (271 aa).

A disordered region spans residues 233-261 (VEPDPNRFSEPVDQPTLVEEGKEARRTER). Residues 251–261 (EEGKEARRTER) show a composition bias toward basic and acidic residues.

In terms of biological role, may be involved in swimming motility. This is an uncharacterized protein from Haloferax volcanii (strain ATCC 29605 / DSM 3757 / JCM 8879 / NBRC 14742 / NCIMB 2012 / VKM B-1768 / DS2) (Halobacterium volcanii).